Here is a 475-residue protein sequence, read N- to C-terminus: Ribulose bisphosphate carboxylase large chain (475 aa).

Positions 1-2 (MS) are excised as a propeptide. Proline 3 bears the N-acetylproline mark. N6,N6,N6-trimethyllysine is present on lysine 14. Substrate is bound by residues asparagine 123 and threonine 173. Catalysis depends on lysine 175, which acts as the Proton acceptor. Residue lysine 177 participates in substrate binding. Mg(2+) contacts are provided by lysine 201, aspartate 203, and glutamate 204. Lysine 201 is subject to N6-carboxylysine. Catalysis depends on histidine 294, which acts as the Proton acceptor. 3 residues coordinate substrate: arginine 295, histidine 327, and serine 379.

This sequence belongs to the RuBisCO large chain family. Type I subfamily. Heterohexadecamer of 8 large chains and 8 small chains; disulfide-linked. The disulfide link is formed within the large subunit homodimers. Mg(2+) is required as a cofactor. Post-translationally, the disulfide bond which can form in the large chain dimeric partners within the hexadecamer appears to be associated with oxidative stress and protein turnover.

Its subcellular location is the plastid. The protein localises to the chloroplast. It catalyses the reaction 2 (2R)-3-phosphoglycerate + 2 H(+) = D-ribulose 1,5-bisphosphate + CO2 + H2O. The enzyme catalyses D-ribulose 1,5-bisphosphate + O2 = 2-phosphoglycolate + (2R)-3-phosphoglycerate + 2 H(+). Its function is as follows. RuBisCO catalyzes two reactions: the carboxylation of D-ribulose 1,5-bisphosphate, the primary event in carbon dioxide fixation, as well as the oxidative fragmentation of the pentose substrate in the photorespiration process. Both reactions occur simultaneously and in competition at the same active site. The sequence is that of Ribulose bisphosphate carboxylase large chain from Pinus thunbergii (Japanese black pine).